The sequence spans 259 residues: 5'-nucleotidase SurE (259 aa).

The a divalent metal cation site is built by Asp15, Asp16, Ser46, and Asn102.

Belongs to the SurE nucleotidase family. A divalent metal cation is required as a cofactor.

It is found in the cytoplasm. The catalysed reaction is a ribonucleoside 5'-phosphate + H2O = a ribonucleoside + phosphate. Nucleotidase that shows phosphatase activity on nucleoside 5'-monophosphates. The chain is 5'-nucleotidase SurE from Chlorobium luteolum (strain DSM 273 / BCRC 81028 / 2530) (Pelodictyon luteolum).